We begin with the raw amino-acid sequence, 368 residues long: Probable leucine aminopeptidase ARB_03492 (368 aa).

The first 18 residues, 1–18, serve as a signal peptide directing secretion; it reads MKVSAIAAVAALAAVAVA. The N-linked (GlcNAc...) asparagine glycan is linked to N92. Zn(2+) contacts are provided by H172 and D191. N192 and N216 each carry an N-linked (GlcNAc...) asparagine glycan. Residues E230 and D257 each coordinate Zn(2+). C301 and C305 form a disulfide bridge. H334 serves as a coordination point for Zn(2+).

This sequence belongs to the peptidase M28 family. M28E subfamily. Monomer. Requires Zn(2+) as cofactor.

Its subcellular location is the secreted. Functionally, probable extracellular aminopeptidase which contributes to pathogenicity. The protein is Probable leucine aminopeptidase ARB_03492 of Arthroderma benhamiae (strain ATCC MYA-4681 / CBS 112371) (Trichophyton mentagrophytes).